Here is a 1551-residue protein sequence, read N- to C-terminus: Pentafunctional AROM polypeptide 1 (1551 aa).

Positions 1–379 (MSIEKVSILG…YESKAHQIFK (379 aa)) are 3-dehydroquinate synthase. Residues 42-44 (DTN), 80-83 (ENHK), 111-113 (GGV), and Asp-116 each bind NAD(+). Residue Arg-127 participates in 7-phospho-2-dehydro-3-deoxy-D-arabino-heptonate binding. An NAD(+)-binding site is contributed by 136–137 (TT). The 7-phospho-2-dehydro-3-deoxy-D-arabino-heptonate site is built by Asp-143 and Lys-149. Lys-158 contributes to the NAD(+) binding site. Residue Asn-159 participates in 7-phospho-2-dehydro-3-deoxy-D-arabino-heptonate binding. NAD(+) contacts are provided by residues 176 to 179 (FLQT) and Asn-187. Glu-191 is a Zn(2+) binding site. 7-phospho-2-dehydro-3-deoxy-D-arabino-heptonate-binding positions include 191–194 (EVVK) and Lys-243. The Proton acceptor; for 3-dehydroquinate synthase activity role is filled by Glu-253. 7-phospho-2-dehydro-3-deoxy-D-arabino-heptonate-binding positions include 257–261 (RNLLN) and His-264. Position 264 (His-264) interacts with Zn(2+). The active-site Proton acceptor; for 3-dehydroquinate synthase activity is His-268. 7-phospho-2-dehydro-3-deoxy-D-arabino-heptonate contacts are provided by His-280 and Lys-351. A Zn(2+)-binding site is contributed by His-280. The interval 392 to 835 (VHPFANRHPE…WDVLHSKFNA (444 aa)) is EPSP synthase. The segment at 854-1044 (DRSIVIIGMR…LPATRSTFVT (191 aa)) is shikimate kinase. 861–868 (GMRAAGKT) contributes to the ATP binding site. Residues 1045-1258 (LTYPDLRKVP…IGVGQLSLKE (214 aa)) are 3-dehydroquinase. The active-site Proton acceptor; for 3-dehydroquinate dehydratase activity is His-1162. The active-site Schiff-base intermediate with substrate; for 3-dehydroquinate dehydratase activity is the Lys-1191. The interval 1271 to 1551 (EKEFWVVGSP…KVIHSAVLNE (281 aa)) is shikimate dehydrogenase.

In the N-terminal section; belongs to the sugar phosphate cyclases superfamily. Dehydroquinate synthase family. It in the 2nd section; belongs to the EPSP synthase family. The protein in the 3rd section; belongs to the shikimate kinase family. This sequence in the 4th section; belongs to the type-I 3-dehydroquinase family. In the C-terminal section; belongs to the shikimate dehydrogenase family. In terms of assembly, homodimer. The cofactor is Zn(2+).

It is found in the cytoplasm. It carries out the reaction 7-phospho-2-dehydro-3-deoxy-D-arabino-heptonate = 3-dehydroquinate + phosphate. It catalyses the reaction 3-dehydroquinate = 3-dehydroshikimate + H2O. The catalysed reaction is shikimate + NADP(+) = 3-dehydroshikimate + NADPH + H(+). The enzyme catalyses shikimate + ATP = 3-phosphoshikimate + ADP + H(+). It carries out the reaction 3-phosphoshikimate + phosphoenolpyruvate = 5-O-(1-carboxyvinyl)-3-phosphoshikimate + phosphate. Its pathway is metabolic intermediate biosynthesis; chorismate biosynthesis; chorismate from D-erythrose 4-phosphate and phosphoenolpyruvate: step 2/7. It functions in the pathway metabolic intermediate biosynthesis; chorismate biosynthesis; chorismate from D-erythrose 4-phosphate and phosphoenolpyruvate: step 3/7. It participates in metabolic intermediate biosynthesis; chorismate biosynthesis; chorismate from D-erythrose 4-phosphate and phosphoenolpyruvate: step 4/7. The protein operates within metabolic intermediate biosynthesis; chorismate biosynthesis; chorismate from D-erythrose 4-phosphate and phosphoenolpyruvate: step 5/7. Its pathway is metabolic intermediate biosynthesis; chorismate biosynthesis; chorismate from D-erythrose 4-phosphate and phosphoenolpyruvate: step 6/7. Its function is as follows. The AROM polypeptide catalyzes 5 consecutive enzymatic reactions in prechorismate polyaromatic amino acid biosynthesis. This is Pentafunctional AROM polypeptide 1 from Lodderomyces elongisporus (strain ATCC 11503 / CBS 2605 / JCM 1781 / NBRC 1676 / NRRL YB-4239) (Yeast).